Here is a 327-residue protein sequence, read N- to C-terminus: GMP reductase (327 aa).

Cys-175 (thioimidate intermediate) is an active-site residue. 204 to 227 is a binding site for NADP(+); sequence IIADGGIRTNGDVAKSIRFGATMV.

Belongs to the IMPDH/GMPR family. GuaC type 2 subfamily.

It catalyses the reaction IMP + NH4(+) + NADP(+) = GMP + NADPH + 2 H(+). Functionally, catalyzes the irreversible NADPH-dependent deamination of GMP to IMP. It functions in the conversion of nucleobase, nucleoside and nucleotide derivatives of G to A nucleotides, and in maintaining the intracellular balance of A and G nucleotides. In Bacillus anthracis, this protein is GMP reductase.